The chain runs to 117 residues: Cuticle protein CP1243 (117 aa).

Repeat copies occupy residues 1–17 (NYGE…LVQF), 26–43 (AEIG…HVQF), 67–84 (QPYG…NRQF), and 93–110 (VLVG…NVQF).

As to expression, calcified shell.

The protein is Cuticle protein CP1243 of Cancer pagurus (Rock crab).